Consider the following 188-residue polypeptide: Casparian strip membrane protein 1 (188 aa).

The Cytoplasmic portion of the chain corresponds to 1-24; that stretch reads MKAGALELGHASKTTKSGVNRGMS. Residues 25–45 form a helical membrane-spanning segment; that stretch reads ILDLFIRIIAIIATLGSAIAM. Over 46–72 the chain is Extracellular; sequence GTTNETLPFFTQFVRFKAKYSDLPTFT. Asn49 carries N-linked (GlcNAc...) asparagine glycosylation. A helical transmembrane segment spans residues 73-93; sequence FFVVANAIVSAYLVLSLGLSI. The Cytoplasmic portion of the chain corresponds to 94–105; it reads YHIMRSRAQATR. Residues 106-126 traverse the membrane as a helical segment; that stretch reads IALIFFDAAMLGLLTGGASAS. The Extracellular portion of the chain corresponds to 127-159; it reads AAIVYLAHKGNRKTNWFPICQQYDSFCHRTSGS. Residues 160-180 traverse the membrane as a helical segment; the sequence is LVGSFAGSVLIILLIFLSAIA. Residues 181-188 lie on the Cytoplasmic side of the membrane; it reads LSRQSLNH.

It belongs to the Casparian strip membrane proteins (CASP) family. As to quaternary structure, homodimer and heterodimers.

It is found in the cell membrane. Regulates membrane-cell wall junctions and localized cell wall deposition. Required for establishment of the Casparian strip membrane domain (CSD) and the subsequent formation of Casparian strips, a cell wall modification of the root endodermis that determines an apoplastic barrier between the intraorganismal apoplasm and the extraorganismal apoplasm and prevents lateral diffusion. This is Casparian strip membrane protein 1 from Solanum tuberosum (Potato).